The sequence spans 192 residues: Large ribosomal subunit protein bL9 (192 aa).

Residues 172–192 form a disordered region; that stretch reads DALRPEDFFDPEADGIDEDEA. Positions 179 to 192 are enriched in acidic residues; the sequence is FFDPEADGIDEDEA.

Belongs to the bacterial ribosomal protein bL9 family.

Its function is as follows. Binds to the 23S rRNA. This Rhizobium etli (strain CIAT 652) protein is Large ribosomal subunit protein bL9.